The primary structure comprises 345 residues: Pectin lyase (345 aa).

The signal sequence occupies residues 1 to 24 (MKRFCLWFAVFSLLLVLLPGKAFG). The active site involves Arg-234.

This sequence belongs to the polysaccharide lyase 1 family.

Its subcellular location is the secreted. It carries out the reaction Eliminative cleavage of (1-&gt;4)-alpha-D-galacturonan methyl ester to give oligosaccharides with 4-deoxy-6-O-methyl-alpha-D-galact-4-enuronosyl groups at their non-reducing ends.. Inhibited by Hg(2+) and Mn(2+). Not affected by EDTA in vitro. Its function is as follows. Catalyzes the depolymerization of pectins of methyl esterification degree from 13 to 75%, with an endo mode of action. Cannot degrade polygalacturonate. Also displays protopectinase activity, i.e. releases pectin from protopectin. In Bacillus subtilis, this protein is Pectin lyase (pelB).